Consider the following 624-residue polypeptide: (-)-beta-phellandrene synthase 3, chloroplastic (624 aa).

The transit peptide at 1 to 48 (MAIVSSVPLASKSCLHKSLISSIHKLKPFCRTIPTLGMSRPGKYVMPS) directs the protein to the chloroplast. Mg(2+)-binding residues include D375, D379, and D527. A DDXXD motif motif is present at residues 375–379 (DDMYD).

This sequence belongs to the terpene synthase family. Tpsd subfamily. Requires Mg(2+) as cofactor. Mn(2+) serves as cofactor.

It localises to the plastid. Its subcellular location is the chloroplast. It catalyses the reaction (2E)-geranyl diphosphate = (-)-beta-phellandrene + diphosphate. The protein operates within terpene metabolism; oleoresin biosynthesis. Terpene synthase (TPS) involved in the biosynthesis of monoterpene natural products included in conifer oleoresin secretions and volatile emissions; these compounds contribute to biotic and abiotic stress defense against herbivores and pathogens. Catalyzes the conversion of (2E)-geranyl diphosphate (GPP) to (-)-beta-phellandrene. This chain is (-)-beta-phellandrene synthase 3, chloroplastic, found in Picea sitchensis (Sitka spruce).